The chain runs to 530 residues: Poly(U)-binding-splicing factor PUF60 (530 aa).

The segment at 1 to 487 (MATATIALGT…EDAEIIVKIF (487 aa)) is inhibits homodimerization. Lys-14 participates in a covalent cross-link: Glycyl lysine isopeptide (Lys-Gly) (interchain with G-Cter in SUMO2). Thr-31 is subject to Phosphothreonine. The interval 48 to 530 (QSIKSVLVKQ…ERFDNSDLSA (483 aa)) is inhibits transcriptional repression, interaction with ERCC3 and apoptosis induction. Lys-51 participates in a covalent cross-link: Glycyl lysine isopeptide (Lys-Gly) (interchain with G-Cter in SUMO2). Phosphoserine is present on Ser-83. RRM domains lie at 100–178 (CRVY…RPSN) and 197–275 (NRIY…KAVT). Ser-215 is subject to Phosphoserine. The residue at position 222 (Lys-222) is an N6-acetyllysine. Thr-285 bears the Phosphothreonine mark. Residues 387 to 408 (KKEKEEEELFPESERPEMLSEQ) form a disordered region. Lys-390 is covalently cross-linked (Glycyl lysine isopeptide (Lys-Gly) (interchain with G-Cter in SUMO2)). Over residues 398–408 (ESERPEMLSEQ) the composition is skewed to basic and acidic residues. Position 425 is an N6-acetyllysine (Lys-425). Residue Lys-429 forms a Glycyl lysine isopeptide (Lys-Gly) (interchain with G-Cter in SUMO2) linkage. Positions 433 to 520 (TVMVLRNMVD…RKVVAEVYDQ (88 aa)) constitute an RRM 3; atypical domain.

This sequence belongs to the RRM half pint family. Homodimer. Associates with the spliceosome. Found in a complex with RO60 and Y5 RNA. Found in a complex with FUBP1 and far upstream element (FUSE) DNA segment. Interacts directly with ERCC3. Interacts with CDK7 and GTF2H1. Interacts with SRSF11/P54. Interacts with ARGLU1; interaction may be involved in ARGLU1-mediated modulation of alternative splicing.

Its subcellular location is the nucleus. DNA- and RNA-binding protein, involved in several nuclear processes such as pre-mRNA splicing, apoptosis and transcription regulation. In association with FUBP1 regulates MYC transcription at the P2 promoter through the core-TFIIH basal transcription factor. Acts as a transcriptional repressor through the core-TFIIH basal transcription factor. Represses FUBP1-induced transcriptional activation but not basal transcription. Decreases ERCC3 helicase activity. Is also involved in pre-mRNA splicing. Promotes splicing of an intron with weak 3'-splice site and pyrimidine tract in a cooperative manner with U2AF2. Involved in apoptosis induction when overexpressed in HeLa cells. Modulates alternative splicing of several mRNAs. Binds to relaxed DNA of active promoter regions. Binds to the pyrimidine tract and 3'-splice site regions of pre-mRNA; binding is enhanced in presence of U2AF2. Binds to Y5 RNA in association with RO60. Binds to poly(U) RNA. This chain is Poly(U)-binding-splicing factor PUF60, found in Bos taurus (Bovine).